Here is a 123-residue protein sequence, read N- to C-terminus: uncharacterized protein (123 aa).

A run of 4 helical transmembrane segments spans residues 9–31, 38–56, 67–91, and 98–114; these read LLLR…WISF, VLTL…VFAV, VIAV…AALY, and VSIV…IISA.

The protein to E.coli YhgE.

The protein localises to the cell membrane. This is an uncharacterized protein from Bacillus subtilis (strain 168).